The chain runs to 757 residues: Endonuclease MutS2 (757 aa).

An ATP-binding site is contributed by 321-328 (GPNMGGKT). Positions 681 to 756 (IDIRGMTVEE…GTGVTVVEVK (76 aa)) constitute a Smr domain.

Belongs to the DNA mismatch repair MutS family. MutS2 subfamily. Homodimer. Binds to stalled ribosomes, contacting rRNA. Interacts with MutL.

Its activity is regulated as follows. Nuclease activity is stimulated by interaction with MutL and inhibited in the presence of non-hydrolytic ATP (ADPnP). ATPase activity is stimulated by DNA. Functionally, endonuclease that is involved in the suppression of homologous recombination and thus may have a key role in the control of bacterial genetic diversity. Has ATPase activity. Binds to DNA. Its function is as follows. Acts as a ribosome collision sensor, splitting the ribosome into its 2 subunits. Detects stalled/collided 70S ribosomes which it binds and splits by an ATP-hydrolysis driven conformational change. Acts upstream of the ribosome quality control system (RQC), a ribosome-associated complex that mediates the extraction of incompletely synthesized nascent chains from stalled ribosomes and their subsequent degradation. Probably generates substrates for RQC. This chain is Endonuclease MutS2, found in Thermotoga maritima (strain ATCC 43589 / DSM 3109 / JCM 10099 / NBRC 100826 / MSB8).